The primary structure comprises 485 residues: Membrane-bound lytic murein transglycosylase F (485 aa).

A signal peptide spans 1–29; it reads MFAHTALRQRCAKWLFATGLFLLLGACVE. A non-LT domain region spans residues 30-267; sequence KPSTLERVKE…RLKDRYYGHV (238 aa). Residues 268–485 are LT domain; sequence DVLGYVGAYT…DKPADQSPPM (218 aa). E314 is an active-site residue. The interval 465 to 485 is disordered; the sequence is EGNLHVPGVNKDKPADQSPPM.

This sequence in the N-terminal section; belongs to the bacterial solute-binding protein 3 family. The protein in the C-terminal section; belongs to the transglycosylase Slt family.

It is found in the cell outer membrane. The enzyme catalyses Exolytic cleavage of the (1-&gt;4)-beta-glycosidic linkage between N-acetylmuramic acid (MurNAc) and N-acetylglucosamine (GlcNAc) residues in peptidoglycan, from either the reducing or the non-reducing ends of the peptidoglycan chains, with concomitant formation of a 1,6-anhydrobond in the MurNAc residue.. Its function is as follows. Murein-degrading enzyme that degrades murein glycan strands and insoluble, high-molecular weight murein sacculi, with the concomitant formation of a 1,6-anhydromuramoyl product. Lytic transglycosylases (LTs) play an integral role in the metabolism of the peptidoglycan (PG) sacculus. Their lytic action creates space within the PG sacculus to allow for its expansion as well as for the insertion of various structures such as secretion systems and flagella. The polypeptide is Membrane-bound lytic murein transglycosylase F (Pseudomonas putida (strain GB-1)).